Reading from the N-terminus, the 358-residue chain is Secreted protein RBT4 (358 aa).

A signal peptide spans 1–19; the sequence is MKFSQVATTAAIFAGLTTA. Composition is skewed to low complexity over residues 48–63, 153–174, and 189–200; these read VTGG…QSAA, TTEV…VATP, and AATTASGSSSGS. 2 disordered regions span residues 48–98 and 144–203; these read VTGG…DGGN and GFPS…SNDF. Residues 216–332 form the SCP domain; sequence LDAHNKKRAR…NWGLYVVCSY (117 aa).

It belongs to the CRISP family.

It localises to the secreted. In terms of biological role, secreted protein that acts as a virulence factor during infections such as in posttraumatic corneal infections. Acts as an important antigen in patients with systemic candidiasis and plays a role in the protection against phagocyte attack. The polypeptide is Secreted protein RBT4 (RBT4) (Candida albicans (strain SC5314 / ATCC MYA-2876) (Yeast)).